An 806-amino-acid chain; its full sequence is Phenylalanine--tRNA ligase beta subunit (806 aa).

The 116-residue stretch at 40-155 (NKGVKGVVVG…SDAEVGADAL (116 aa)) folds into the tRNA-binding domain. A B5 domain is found at 409 to 484 (VQERTVSVTA…RLYGYDHIPV (76 aa)). Positions 462, 468, 471, and 472 each coordinate Mg(2+). Positions 712–805 (PRFPSMTRDM…VEEKFGAELR (94 aa)) constitute an FDX-ACB domain.

Belongs to the phenylalanyl-tRNA synthetase beta subunit family. Type 1 subfamily. Tetramer of two alpha and two beta subunits. Mg(2+) serves as cofactor.

The protein resides in the cytoplasm. The enzyme catalyses tRNA(Phe) + L-phenylalanine + ATP = L-phenylalanyl-tRNA(Phe) + AMP + diphosphate + H(+). The chain is Phenylalanine--tRNA ligase beta subunit from Bacillus thuringiensis subsp. konkukian (strain 97-27).